The sequence spans 433 residues: Deoxyguanosinetriphosphate triphosphohydrolase-like protein 2 (433 aa).

Positions 61 to 248 (RLTHSLEVAQ…METADDIAYT (188 aa)) constitute an HD domain.

The protein belongs to the dGTPase family. Type 2 subfamily.

The polypeptide is Deoxyguanosinetriphosphate triphosphohydrolase-like protein 2 (Deinococcus radiodurans (strain ATCC 13939 / DSM 20539 / JCM 16871 / CCUG 27074 / LMG 4051 / NBRC 15346 / NCIMB 9279 / VKM B-1422 / R1)).